A 660-amino-acid polypeptide reads, in one-letter code: DNA mismatch repair protein MutL (660 aa).

The disordered stretch occupies residues 408-436 (DQTSASASVKHASRSQDENQLSEHPNLDF). Positions 425 to 436 (ENQLSEHPNLDF) are enriched in polar residues.

The protein belongs to the DNA mismatch repair MutL/HexB family.

Functionally, this protein is involved in the repair of mismatches in DNA. It is required for dam-dependent methyl-directed DNA mismatch repair. May act as a 'molecular matchmaker', a protein that promotes the formation of a stable complex between two or more DNA-binding proteins in an ATP-dependent manner without itself being part of a final effector complex. This chain is DNA mismatch repair protein MutL, found in Streptococcus uberis (strain ATCC BAA-854 / 0140J).